Consider the following 39-residue polypeptide: MADFTRIPLWLIGTIVGILVIGLIGIYFYGSYSGLGSSL.

A helical membrane pass occupies residues 7 to 27; sequence IPLWLIGTIVGILVIGLIGIY.

It belongs to the PsbJ family. PSII is composed of 1 copy each of membrane proteins PsbA, PsbB, PsbC, PsbD, PsbE, PsbF, PsbH, PsbI, PsbJ, PsbK, PsbL, PsbM, PsbT, PsbX, PsbY, PsbZ, Psb30/Ycf12, at least 3 peripheral proteins of the oxygen-evolving complex and a large number of cofactors. It forms dimeric complexes.

Its subcellular location is the plastid. It localises to the chloroplast thylakoid membrane. Functionally, one of the components of the core complex of photosystem II (PSII). PSII is a light-driven water:plastoquinone oxidoreductase that uses light energy to abstract electrons from H(2)O, generating O(2) and a proton gradient subsequently used for ATP formation. It consists of a core antenna complex that captures photons, and an electron transfer chain that converts photonic excitation into a charge separation. This is Photosystem II reaction center protein J from Welwitschia mirabilis (Tree tumbo).